We begin with the raw amino-acid sequence, 183 residues long: Microfibrillar-associated protein 2 (183 aa).

Positions 1–17 are cleaved as a signal peptide; that stretch reads MRAASLFLLFLPAGLLA. Gln18 bears the Pyrrolidone carboxylic acid mark. An Isoglutamyl lysine isopeptide (Gln-Lys) (interchain with K-?) cross-link involves residue Gln20. Sulfotyrosine is present on residues Tyr47, Tyr48, and Tyr50. The region spanning 153–183 is the ShKT domain; sequence CRDKFSKCGVLASSGLCQSVAAACARSCGGC. Intrachain disulfides connect Cys153–Cys183, Cys160–Cys176, and Cys169–Cys180.

It belongs to the MFAP family. As to quaternary structure, forms a ternary complex with BGN and ELN. Interacts with FBN1 (via N-terminal domain) and FBN2. In terms of processing, O-glycosylated; glycans consist of Gal(beta1-3)GalNAc. Post-translationally, forms intermolecular disulfide bonds either with other MAGP-1 molecules or with other components of the microfibrils. Forms transglutaminase cross-links with tropoelastin.

It is found in the secreted. The protein localises to the extracellular space. It localises to the extracellular matrix. In terms of biological role, component of the elastin-associated microfibrils. This is Microfibrillar-associated protein 2 (MFAP2) from Bos taurus (Bovine).